The primary structure comprises 303 residues: HTH-type transcriptional regulator CatM (303 aa).

The HTH lysR-type domain maps to 1–58 (MELRHLRYFVTVVEEQSISKAAEKLCIAQPPLSRQIQKLEEELGIQLFERGFRPAKVT). Positions 18–37 (ISKAAEKLCIAQPPLSRQIQ) form a DNA-binding region, H-T-H motif. Cis,cis-muconate contacts are provided by Ser99 and Thr128.

This sequence belongs to the LysR transcriptional regulatory family. Homotetramer in solution.

Its function is as follows. Positively regulates the expression of catA, catBCIJFD and benPK in response to cis,cis-muconate. It binds to the catB-catM intercistronic region, to a specific sequence upstream of catA and to the benPK promoter region. Can also repress pca genes. The protein is HTH-type transcriptional regulator CatM (catM) of Acinetobacter baylyi (strain ATCC 33305 / BD413 / ADP1).